Consider the following 476-residue polypeptide: Cysteine--tRNA ligase (476 aa).

Cysteine 27 contacts Zn(2+). Positions 29-39 (PTTYNYIHLGN) match the 'HIGH' region motif. Zn(2+) is bound by residues cysteine 207, histidine 232, and glutamate 236. Residues 264–268 (KMSKS) carry the 'KMSKS' region motif. An ATP-binding site is contributed by lysine 267.

It belongs to the class-I aminoacyl-tRNA synthetase family. As to quaternary structure, monomer. Requires Zn(2+) as cofactor.

It is found in the cytoplasm. It catalyses the reaction tRNA(Cys) + L-cysteine + ATP = L-cysteinyl-tRNA(Cys) + AMP + diphosphate. In Moorella thermoacetica (strain ATCC 39073 / JCM 9320), this protein is Cysteine--tRNA ligase.